The chain runs to 281 residues: Sulfur carrier protein FdhD (281 aa).

Catalysis depends on C117, which acts as the Cysteine persulfide intermediate.

It belongs to the FdhD family.

The protein resides in the cytoplasm. In terms of biological role, required for formate dehydrogenase (FDH) activity. Acts as a sulfur carrier protein that transfers sulfur from IscS to the molybdenum cofactor prior to its insertion into FDH. The polypeptide is Sulfur carrier protein FdhD (Xanthomonas oryzae pv. oryzae (strain MAFF 311018)).